The primary structure comprises 78 residues: MNLAQKCLVGAIRVYQLALSPWLGRQCRYLPTCSEYGKEAIEKHGALKGSWLAAKRIGRCRPGCSHGYDPVPPVDPRK.

It belongs to the UPF0161 family.

It is found in the cell inner membrane. In terms of biological role, could be involved in insertion of integral membrane proteins into the membrane. The chain is Putative membrane protein insertion efficiency factor from Thiobacillus denitrificans (strain ATCC 25259 / T1).